A 365-amino-acid chain; its full sequence is 2-aminoethylphosphonate--pyruvate transaminase (365 aa).

Lysine 194 carries the N6-(pyridoxal phosphate)lysine modification.

Belongs to the class-V pyridoxal-phosphate-dependent aminotransferase family. PhnW subfamily. In terms of assembly, homodimer. Requires pyridoxal 5'-phosphate as cofactor.

The enzyme catalyses (2-aminoethyl)phosphonate + pyruvate = phosphonoacetaldehyde + L-alanine. Involved in phosphonate degradation. This Bacillus cereus (strain ZK / E33L) protein is 2-aminoethylphosphonate--pyruvate transaminase.